A 158-amino-acid polypeptide reads, in one-letter code: Mitotic-spindle organizing protein 2A (158 aa).

Ser34 is modified (phosphoserine). Residues 84 to 158 (RLASEPQDPA…PGKSPTQGST (75 aa)) form a disordered region. A compositionally biased stretch (low complexity) spans 112–122 (SAALGGVLALA). A compositionally biased stretch (polar residues) spans 128–140 (EGSSQRMPRQPSA). Position 152 is a phosphoserine (Ser152).

This sequence belongs to the MOZART2 family. As to quaternary structure, associates with the gamma-tubulin ring complex (gTuRC) consisting of TUBGCP2, TUBGCP3, TUBGCP4, TUBGCP5 and TUBGCP6 and gamma-tubulin TUBG1 or TUBG2; within the complex, interacts with TUBGCP2; the interaction plays a role in gTuRC activation.

It localises to the cytoplasm. Its subcellular location is the cytoskeleton. The protein resides in the microtubule organizing center. It is found in the centrosome. The protein localises to the spindle. In terms of biological role, required for the recruitment and the assembly of the gamma-tubulin ring complex (gTuRC) at the centrosome. The gTuRC regulates the minus-end nucleation of alpha-beta tubulin heterodimers that grow into microtubule protafilaments, a critical step in centrosome duplication and spindle formation. This is Mitotic-spindle organizing protein 2A (MZT2A) from Homo sapiens (Human).